Reading from the N-terminus, the 248-residue chain is Small ribosomal subunit protein uS2c (248 aa).

Belongs to the universal ribosomal protein uS2 family.

The protein localises to the plastid. Its subcellular location is the chloroplast. This Trachelium caeruleum (Blue throatwort) protein is Small ribosomal subunit protein uS2c (rps2).